The sequence spans 1235 residues: N-acetylglucosamine-1-phosphotransferase subunits alpha/beta (1235 aa).

Residues 22–42 (VCFVGVVVTIVSAFQFGEVVL) traverse the membrane as a helical segment. N-linked (GlcNAc...) asparagine glycans are attached at residues N83, N114, N148, and N179. 4 cysteine pairs are disulfide-bonded: C438/C461, C452/C468, C505/C528, and C519/C535. LNR repeat units follow at residues 438-473 (CAEG…GNTA) and 505-545 (CNQG…ELYK). Ca(2+)-binding residues include D449, D464, D467, D516, D531, and D534. N-linked (GlcNAc...) asparagine glycosylation is found at N614 and N729. The DMAP1-binding domain maps to 699–823 (NISLLPKEAQ…AQPTLGVTVS (125 aa)). 2 disordered regions span residues 751 to 783 (QART…HRSE) and 830 to 850 (LIVP…AEGN). Over residues 837 to 848 (HLPKEEESDRAE) the composition is skewed to basic and acidic residues. The EF-hand domain occupies 984–1019 (VQPLNISQVFHEVDTDQSGVLSDREIRTLATRIHDL). N-linked (GlcNAc...) asparagine glycosylation is present at N988. 4 residues coordinate Ca(2+): D997, D999, S1001, and E1008. N-linked (GlcNAc...) asparagine glycosylation is present at N1108. Residues 1194–1214 (VLATLIIFTIFSFFAEQIIAL) traverse the membrane as a helical segment.

Belongs to the stealth family. Hexamer of two alpha, two beta and two gamma (GNPTG) subunits; disulfide-linked. The alpha and/or the beta subunits of the enzyme constitute the catalytic subunits. Interacts with LYSET; facilitates proper localization of GNPTAB. Post-translationally, the alpha- and beta-subunits are generated by a proteolytic cleavage by MBTPS1 protease at the Lys-907-Asp-908 bond.

It localises to the golgi apparatus membrane. The enzyme catalyses N(4)-[alpha-D-mannosyl-(1-&gt;2)-alpha-D-mannosyl-(glycan)]-L-asparaginyl-[protein] + UDP-N-acetyl-alpha-D-glucosamine = N(4)-[6-(N-acetyl-alpha-D-glucosaminyl-1-phospho)-alpha-D-mannosyl-(1-&gt;2)-alpha-D-mannosyl-(glycan)]-L-asparaginyl-[protein] + UMP + H(+). Its function is as follows. Catalyzes the formation of mannose 6-phosphate (M6P) markers on high mannose type oligosaccharides in the Golgi apparatus. M6P residues are required to bind to the M6P receptors (MPR), which mediate the vesicular transport of lysosomal enzymes to the endosomal/prelysosomal compartment. The polypeptide is N-acetylglucosamine-1-phosphotransferase subunits alpha/beta (Gnptab) (Mus musculus (Mouse)).